A 171-amino-acid chain; its full sequence is MGQILLILLLQLIYVPVLTLRTIMLVKGKTVIAGLFGTLETLIYIFALGIVFQDLTTVGMIVYAVGFGLGILLGGFVERKLAIGYNMIQVHTKEYPAELIQQMRDNGYGVTHYQGQGRDGVRYRLDVLAARTRMKELRELVEKHEPKAFLVAFDPIDFKGGYMMKGLRRPK.

3 helical membrane passes run 4 to 24 (ILLI…RTIM), 32 to 52 (IAGL…GIVF), and 57 to 77 (TVGM…GGFV).

This sequence belongs to the UPF0316 family.

The protein localises to the cell membrane. The chain is UPF0316 protein EAT1b_0871 from Exiguobacterium sp. (strain ATCC BAA-1283 / AT1b).